Consider the following 432-residue polypeptide: MGNNVVVLGTQWGDEGKGKIVDLLTERAKYVVRYQGGHNAGHTLVINGEKTVLHLIPSGILRENVTSIIGNGVVLSPAALMKEMKGLEDRGIPVRERLLLSEACPLILDYHVALDVAREKARGAKAIGTTGRGIGPAYEDKVARRGLRVGDLFDKATFADKLKEVMEYHNFQLVNFYKAEAVDYQKVLDDVMAIADILTSMVVDVSDLLDQARQRGDFVMFEGAQGTLLDIDHGTYPYVTSSNTTAGGVATGSGLGPRYVDYVLGIIKAYSTRVGAGPFPTELFDETGEFLCKQGNEFGATTGRRRRTGWLDAVAVRRAVQINSLSGFCLTKLDVLDGLKEVKICVGYRMPDGREVTTTPLAADNWEGIEPIYETMPGWSETTFGVKERSGLPQAALNYIQRIEELTGVPVDIISTGPDRTETMILRDPFDA.

GTP contacts are provided by residues 13–19 (GDEGKGK) and 41–43 (GHT). The active-site Proton acceptor is the aspartate 14. Residues aspartate 14 and glycine 41 each coordinate Mg(2+). Residues 14–17 (DEGK), 39–42 (NAGH), threonine 130, arginine 144, glutamine 225, threonine 240, and arginine 304 contribute to the IMP site. The Proton donor role is filled by histidine 42. Residue 300–306 (ATTGRRR) coordinates substrate. GTP-binding positions include arginine 306, 332 to 334 (KLD), and 415 to 417 (STG).

Belongs to the adenylosuccinate synthetase family. Homodimer. The cofactor is Mg(2+).

It localises to the cytoplasm. It carries out the reaction IMP + L-aspartate + GTP = N(6)-(1,2-dicarboxyethyl)-AMP + GDP + phosphate + 2 H(+). It participates in purine metabolism; AMP biosynthesis via de novo pathway; AMP from IMP: step 1/2. Plays an important role in the de novo pathway of purine nucleotide biosynthesis. Catalyzes the first committed step in the biosynthesis of AMP from IMP. The polypeptide is Adenylosuccinate synthetase (Klebsiella pneumoniae subsp. pneumoniae (strain ATCC 700721 / MGH 78578)).